We begin with the raw amino-acid sequence, 178 residues long: MIGKKVLDEIYEINIAMELIVLGARMQVLESETSVSRRRLVRLYKEIRGCPPPKGMLPFSEDWFMCWEQNIHSSLFYNIYLCLQKTENERPITTLMQAYRLYLEQCYPHSSETPVLGLTRAWTLLRFIGCGMISRKSCMLCAGGFVMVTEFIKEPFTCSLCCPPSRALKKFSATSGSS.

Residues Cys138, Cys141, Cys158, and Cys161 each coordinate Zn(2+).

It belongs to the FlhC family. Heterohexamer composed of two FlhC and four FlhD subunits. Each FlhC binds a FlhD dimer, forming a heterotrimer, and a hexamer assembles by dimerization of two heterotrimers. Requires Zn(2+) as cofactor.

The protein localises to the cytoplasm. Functions in complex with FlhD as a master transcriptional regulator that regulates transcription of several flagellar and non-flagellar operons by binding to their promoter region. Activates expression of class 2 flagellar genes, including fliA, which is a flagellum-specific sigma factor that turns on the class 3 genes. Also regulates genes whose products function in a variety of physiological pathways. In Erwinia tasmaniensis (strain DSM 17950 / CFBP 7177 / CIP 109463 / NCPPB 4357 / Et1/99), this protein is Flagellar transcriptional regulator FlhC.